Reading from the N-terminus, the 249-residue chain is Ribosomal RNA small subunit methyltransferase J (249 aa).

Position 169 (aspartate 169) interacts with S-adenosyl-L-methionine.

This sequence belongs to the methyltransferase superfamily. RsmJ family.

It localises to the cytoplasm. The enzyme catalyses guanosine(1516) in 16S rRNA + S-adenosyl-L-methionine = N(2)-methylguanosine(1516) in 16S rRNA + S-adenosyl-L-homocysteine + H(+). Specifically methylates the guanosine in position 1516 of 16S rRNA. The chain is Ribosomal RNA small subunit methyltransferase J from Buchnera aphidicola subsp. Schizaphis graminum (strain Sg).